The sequence spans 150 residues: Ribosome maturation factor RimP (150 aa).

The protein belongs to the RimP family.

It is found in the cytoplasm. In terms of biological role, required for maturation of 30S ribosomal subunits. The polypeptide is Ribosome maturation factor RimP (Francisella tularensis subsp. holarctica (strain LVS)).